Consider the following 819-residue polypeptide: Ferric-pyoverdine 358 receptor (819 aa).

A signal peptide spans 1-47; sequence MSKPLPSALNPLAKALLIRHSLRPRHALSRIGMGLALSSALVFQVQA. The TonB box signature appears at 115-122; that stretch reads NTVTVTAS. Residues 166–276 form the TBDR plug domain; that stretch reads SIRETPQTIT…PSAVVNVIRK (111 aa). In terms of domain architecture, TBDR beta-barrel spans 281–819; that stretch reads EFKSHIQAGV…NATVTLRYDF (539 aa). Positions 802-819 match the TonB C-terminal box motif; that stretch reads YGHYGAPRNATVTLRYDF.

It belongs to the TonB-dependent receptor family.

It localises to the cell outer membrane. Its function is as follows. Specific receptor for the siderophore ferric pyoverdine (pseudobactin) 358. This is Ferric-pyoverdine 358 receptor (pupA) from Pseudomonas putida (Arthrobacter siderocapsulatus).